Here is a 648-residue protein sequence, read N- to C-terminus: Phosphatidylinositol polyphosphate 5-phosphatase type IV (648 aa).

Positions 1–64 are disordered; the sequence is MPSKSACLRH…PLSMPAKPSN (64 aa). Residues 36-54 show a composition bias toward polar residues; sequence TSASLPAADSQSSQTNSMP. 2 tandem repeats follow at residues 59–62 and 76–79. The segment at 59-243 is 4 X 4 AA repeats of P-X-X-P; it reads PAKPSNQNLQ…AHSNLGPSRP (185 aa). A disordered region spans residues 99–158; it reads RFRGSQEDLTVQNGASPCRGSLQDSVAQSPAYSRPLPCLSTSLQEIPKPRRATGSEGGSP. A Phosphoserine modification is found at serine 103. A compositionally biased stretch (polar residues) spans 120-129; it reads LQDSVAQSPA. Repeat unit 3 spans residues 147-150; it reads PRRA. The residue at position 197 (threonine 197) is a Phosphothreonine. The stretch at 240–243 is repeat 4; it reads PSRP. Serine 245 and serine 260 each carry phosphoserine. Residue cysteine 645 is modified to Cysteine methyl ester. The S-farnesyl cysteine moiety is linked to residue cysteine 645. The propeptide at 646-648 is removed in mature form; it reads TVS.

This sequence belongs to the inositol 1,4,5-trisphosphate 5-phosphatase type IV family. Interacts (when prenylated) with PDE6D; this is important for normal location in cilia.

It is found in the cytoplasm. The protein resides in the cytoskeleton. It localises to the cilium axoneme. Its subcellular location is the golgi apparatus. The protein localises to the golgi stack membrane. It is found in the cell membrane. The protein resides in the cell projection. It localises to the ruffle. Its subcellular location is the nucleus. The enzyme catalyses a 1,2-diacyl-sn-glycero-3-phospho-(1D-myo-inositol-4,5-bisphosphate) + H2O = a 1,2-diacyl-sn-glycero-3-phospho-(1D-myo-inositol 4-phosphate) + phosphate. It catalyses the reaction a 1,2-diacyl-sn-glycero-3-phospho-(1D-myo-inositol-3,4,5-trisphosphate) + H2O = a 1,2-diacyl-sn-glycero-3-phospho-(1D-myo-inositol-3,4-bisphosphate) + phosphate. It carries out the reaction a 1,2-diacyl-sn-glycero-3-phospho-(1D-myo-inositol-3,5-bisphosphate) + H2O = a 1,2-diacyl-sn-glycero-3-phospho-(1D-myo-inositol-3-phosphate) + phosphate. In terms of biological role, phosphatidylinositol (PtdIns) phosphatase that specifically hydrolyzes the 5-phosphate of phosphatidylinositol-3,4,5-trisphosphate (PtdIns(3,4,5)P3), phosphatidylinositol 4,5-bisphosphate PtdIns (4,5)P2 and phosphatidylinositol 3,5-bisphosphate (PtdIns(3,5)P2). Specific for lipid substrates, inactive towards water soluble inositol phosphates. Plays an essential role in the primary cilium by controlling ciliary growth and phosphoinositide 3-kinase (PI3K) signaling and stability. This chain is Phosphatidylinositol polyphosphate 5-phosphatase type IV (Inpp5e), found in Rattus norvegicus (Rat).